Here is a 217-residue protein sequence, read N- to C-terminus: Ribonuclease HII (217 aa).

Residues 27–216 (SRVAGVDEAG…VKESIQEGVC (190 aa)) enclose the RNase H type-2 domain. A divalent metal cation-binding residues include D33, E34, and D126.

This sequence belongs to the RNase HII family. Mn(2+) serves as cofactor. The cofactor is Mg(2+).

Its subcellular location is the cytoplasm. It carries out the reaction Endonucleolytic cleavage to 5'-phosphomonoester.. Endonuclease that specifically degrades the RNA of RNA-DNA hybrids. This Chlamydia trachomatis serovar A (strain ATCC VR-571B / DSM 19440 / HAR-13) protein is Ribonuclease HII.